A 231-amino-acid chain; its full sequence is Histidine biosynthesis bifunctional protein HisIE (231 aa).

A phosphoribosyl-AMP cyclohydrolase region spans residues 1–130; that stretch reads MQDVFRQIDW…QKYPIGVYHI (130 aa). A phosphoribosyl-ATP pyrophosphohydrolase region spans residues 131–231; that stretch reads LDDLYHIIEQ…GIEEKASRKH (101 aa).

It in the N-terminal section; belongs to the PRA-CH family. This sequence in the C-terminal section; belongs to the PRA-PH family.

It localises to the cytoplasm. The catalysed reaction is 1-(5-phospho-beta-D-ribosyl)-ATP + H2O = 1-(5-phospho-beta-D-ribosyl)-5'-AMP + diphosphate + H(+). It carries out the reaction 1-(5-phospho-beta-D-ribosyl)-5'-AMP + H2O = 1-(5-phospho-beta-D-ribosyl)-5-[(5-phospho-beta-D-ribosylamino)methylideneamino]imidazole-4-carboxamide. The protein operates within amino-acid biosynthesis; L-histidine biosynthesis; L-histidine from 5-phospho-alpha-D-ribose 1-diphosphate: step 2/9. It participates in amino-acid biosynthesis; L-histidine biosynthesis; L-histidine from 5-phospho-alpha-D-ribose 1-diphosphate: step 3/9. The chain is Histidine biosynthesis bifunctional protein HisIE from Helicobacter hepaticus (strain ATCC 51449 / 3B1).